We begin with the raw amino-acid sequence, 443 residues long: Tol-Pal system protein TolB (443 aa).

The N-terminal stretch at 1-33 is a signal peptide; that stretch reads MKIGIINTKIRTVFSAFACMIAASLVCTMPARA.

Belongs to the TolB family. In terms of assembly, the Tol-Pal system is composed of five core proteins: the inner membrane proteins TolA, TolQ and TolR, the periplasmic protein TolB and the outer membrane protein Pal. They form a network linking the inner and outer membranes and the peptidoglycan layer.

The protein localises to the periplasm. In terms of biological role, part of the Tol-Pal system, which plays a role in outer membrane invagination during cell division and is important for maintaining outer membrane integrity. This is Tol-Pal system protein TolB from Brucella suis (strain ATCC 23445 / NCTC 10510).